The primary structure comprises 98 residues: NADH-ubiquinone oxidoreductase chain 4L (98 aa).

3 helical membrane passes run 1–21 (MPIIYMNIMLAFTISLLGMLI), 29–49 (SLLCLEGMMLSLFIMNTLMAL), and 58–78 (IVPITLLVFAACEAAVGLALL).

This sequence belongs to the complex I subunit 4L family. Core subunit of respiratory chain NADH dehydrogenase (Complex I) which is composed of 45 different subunits.

It localises to the mitochondrion inner membrane. It carries out the reaction a ubiquinone + NADH + 5 H(+)(in) = a ubiquinol + NAD(+) + 4 H(+)(out). Core subunit of the mitochondrial membrane respiratory chain NADH dehydrogenase (Complex I) which catalyzes electron transfer from NADH through the respiratory chain, using ubiquinone as an electron acceptor. Part of the enzyme membrane arm which is embedded in the lipid bilayer and involved in proton translocation. This Colobus guereza (Mantled guereza) protein is NADH-ubiquinone oxidoreductase chain 4L (MT-ND4L).